A 127-amino-acid polypeptide reads, in one-letter code: Apolipoprotein C-IV (127 aa).

The N-terminal stretch at methionine 1–cysteine 27 is a signal peptide.

This sequence belongs to the apolipoprotein C4 family.

The protein localises to the secreted. Its function is as follows. May participate in lipoprotein metabolism. The protein is Apolipoprotein C-IV (APOC4) of Papio hamadryas (Hamadryas baboon).